A 717-amino-acid chain; its full sequence is F-box only protein 42 (717 aa).

The segment covering M1–E30 has biased composition (acidic residues). The disordered stretch occupies residues M1–M47. Basic and acidic residues predominate over residues E31–H43. The 50-residue stretch at N44–F93 folds into the F-box domain. Kelch repeat units follow at residues S132–D184, L186–D242, M244–D293, and T295–H342. Disordered stretches follow at residues R361–E472 and P508–T539. Over residues P363 to S376 the composition is skewed to low complexity. Residues S365 and S373 each carry the phosphoserine modification. T378 is subject to Phosphothreonine. Polar residues-rich tracts occupy residues Q416 to G426 and S455 to S469. The residue at position 552 (S552) is a Phosphoserine. Over residues G570–G596 the composition is skewed to low complexity. The segment at G570–L635 is disordered.

As to quaternary structure, component of some SCF complex, composed of CUL1, SKP1, RBX1 and FBXO42. Interacts (via the kelch domain) with p53/TP53; interaction is direct.

Its function is as follows. Substrate-recognition component of some SCF (SKP1-CUL1-F-box protein)-type E3 ubiquitin ligase complex. Specifically recognizes p53/TP53, promoting its ubiquitination and degradation. In Pongo abelii (Sumatran orangutan), this protein is F-box only protein 42 (FBXO42).